The sequence spans 180 residues: Large ribosomal subunit protein uL5 (180 aa).

It belongs to the universal ribosomal protein uL5 family. Part of the 50S ribosomal subunit; part of the 5S rRNA/L5/L18/L25 subcomplex. Contacts the 5S rRNA and the P site tRNA. Forms a bridge to the 30S subunit in the 70S ribosome.

This is one of the proteins that bind and probably mediate the attachment of the 5S RNA into the large ribosomal subunit, where it forms part of the central protuberance. In the 70S ribosome it contacts protein S13 of the 30S subunit (bridge B1b), connecting the 2 subunits; this bridge is implicated in subunit movement. Contacts the P site tRNA; the 5S rRNA and some of its associated proteins might help stabilize positioning of ribosome-bound tRNAs. The chain is Large ribosomal subunit protein uL5 from Roseiflexus sp. (strain RS-1).